We begin with the raw amino-acid sequence, 233 residues long: Nickel import system ATP-binding protein NikE (233 aa).

An ABC transporter domain is found at 2 to 228; sequence IELKHVTFGY…DRHPYTKELV (227 aa). 35–42 provides a ligand contact to ATP; sequence GESGCGKS.

The protein belongs to the ABC transporter superfamily. As to quaternary structure, the complex is composed of two ATP-binding proteins (NikD and NikE), two transmembrane proteins (NikB and NikC) and a solute-binding protein (NikA).

Its subcellular location is the cell membrane. It catalyses the reaction Ni(2+)(out) + ATP + H2O = Ni(2+)(in) + ADP + phosphate + H(+). Part of the ABC transporter complex NikABCDE (Opp2) involved in nickel import. Probably responsible for energy coupling to the transport system. The chain is Nickel import system ATP-binding protein NikE from Staphylococcus aureus (strain Mu50 / ATCC 700699).